A 399-amino-acid polypeptide reads, in one-letter code: MAREKFERNKPHVNIGTIGHVDHGKTTLTAAITNVLAKKGQAEVQNYADIDGAPEERERGITINTAHVEYETETRHYAHVDCPGHADYVKNMITGAAQMDGAILVCAATDGPMAQTKEHILLAKQVGVPALVVALNKCDMVDDEEIIELVEMEIRELLSSYDFPGDDIPVVQVSGLKAIEGEAEWEAKIEELMAAVDSSIPEPEREVDKPFLMAVEDVFSITGRGTVATGRIERGIVKVGEEIEIVGIKDTRKTTVTGVEMFRKLLDEGMAGDNVGLLLRGIQKEDIERGMVLVKPGSITPHTKFEGQVYVLKKEEGGRHTPFFAGYRPQFYIRTTDVTGQITAFTAEDGSNVEMVMPGDNIQMTGELICPVAIEQGMRFAIREGGRTIGAGVVSKIIE.

The region spanning 10 to 204 (KPHVNIGTIG…AVDSSIPEPE (195 aa)) is the tr-type G domain. The interval 19–26 (GHVDHGKT) is G1. 19–26 (GHVDHGKT) is a binding site for GTP. Thr-26 contributes to the Mg(2+) binding site. The interval 60–64 (GITIN) is G2. Residues 81–84 (DCPG) are G3. GTP is bound by residues 81–85 (DCPGH) and 136–139 (NKCD). A G4 region spans residues 136 to 139 (NKCD). Residues 174–176 (SGL) form a G5 region.

Belongs to the TRAFAC class translation factor GTPase superfamily. Classic translation factor GTPase family. EF-Tu/EF-1A subfamily. Monomer.

Its subcellular location is the cytoplasm. It carries out the reaction GTP + H2O = GDP + phosphate + H(+). In terms of biological role, GTP hydrolase that promotes the GTP-dependent binding of aminoacyl-tRNA to the A-site of ribosomes during protein biosynthesis. This is Elongation factor Tu from Synechococcus sp. (strain CC9605).